The following is a 210-amino-acid chain: SAP domain-containing ribonucleoprotein (210 aa).

Ala-2 carries the N-acetylalanine modification. An SAP domain is found at 8–42 (LHKLKLAELKQECLARGLETKGIKQDLINRLQAYL). Position 10 is an N6-acetyllysine (Lys-10). The span at 45 to 64 (HAEEEANEEDVLGDETEEEE) shows a compositional bias: acidic residues. The disordered stretch occupies residues 45–87 (HAEEEANEEDVLGDETEEEEPKPIELPVKEEEPPEKVVDMASE). Residues 65–87 (PKPIELPVKEEEPPEKVVDMASE) show a composition bias toward basic and acidic residues. An N6-acetyllysine modification is found at Lys-142. Residues 161-210 (VSSISRKSEDDEKLKKRKERFGIVTSSAGTGTTEDTEAKKRKRAERFGIA) form a disordered region. Residue Ser-163 is modified to Phosphoserine. The segment covering 184–193 (VTSSAGTGTT) has biased composition (polar residues).

The protein belongs to the SAP domain-containing ribonucleoprotein family. As to quaternary structure, interacts with DDX39A. Interacts with FUS. Interacts (via the C-terminal domain) with DDX39B; the interaction is direct and facilitates RNA binding of DDX39B. Component of the transcription/export (TREX) complex at least composed of ALYREF/THOC4, DDX39B, SARNP/CIP29, CHTOP and the THO subcomplex; TREX seems to have dynamic structure involving ATP-dependent remodeling; in the complex interacts directly with DDX39B in a ATP-dependent manner which bridges it to ALYREF/THOC4.

The protein resides in the nucleus. It is found in the nucleus speckle. In terms of biological role, binds both single-stranded and double-stranded DNA with higher affinity for the single-stranded form. Specifically binds to scaffold/matrix attachment region DNA. Also binds single-stranded RNA. Enhances RNA unwinding activity of DDX39A. May participate in important transcriptional or translational control of cell growth, metabolism and carcinogenesis. Component of the TREX complex which is thought to couple mRNA transcription, processing and nuclear export, and specifically associates with spliced mRNA and not with unspliced pre-mRNA. The TREX complex is recruited to spliced mRNAs by a transcription-independent mechanism, binds to mRNA upstream of the exon-junction complex (EJC) and is recruited in a splicing- and cap-dependent manner to a region near the 5' end of the mRNA where it functions in mRNA export to the cytoplasm via the TAP/NXF1 pathway. Associates with DDX39B, which facilitates RNA binding of DDX39B and likely plays a role in mRNA export. The protein is SAP domain-containing ribonucleoprotein (Sarnp) of Rattus norvegicus (Rat).